The primary structure comprises 1039 residues: Multidrug resistance protein MdtB (1039 aa).

A run of 11 helical transmembrane segments spans residues 15–37 (LFIM…GIIG), 345–362 (FELM…YLFL), 367–389 (ATII…MVFL), 396–418 (LTLM…VIEN), 438–460 (GEIG…PLLF), 472–494 (FAIT…TPMM), 535–557 (HPWL…WVFI), 866–888 (VWLI…ESFI), 908–930 (LMIA…IGIV), 967–989 (ILMT…GVGA), and 999–1021 (MVGG…YLLF).

This sequence belongs to the resistance-nodulation-cell division (RND) (TC 2.A.6) family. MdtB subfamily. Part of a tripartite efflux system composed of MdtA, MdtB and MdtC. MdtB forms a heteromultimer with MdtC.

It localises to the cell inner membrane. This Shigella flexneri protein is Multidrug resistance protein MdtB.